The chain runs to 358 residues: Neutral protease 2 homolog PADG_00776 (358 aa).

Residues 1-19 (MRRVSGILAVAAFTISAFA) form the signal peptide. A propeptide spanning residues 20–185 (GVIQPVAKDA…MNQFVKIAKL (166 aa)) is cleaved from the precursor. 2 disulfides stabilise this stretch: Cys188/Cys259 and Cys266/Cys284. Asn249 carries N-linked (GlcNAc...) asparagine glycosylation. Zn(2+) is bound at residue His309. The active site involves Glu310. 2 residues coordinate Zn(2+): His313 and Asp324.

It belongs to the peptidase M35 family. Requires Zn(2+) as cofactor.

It is found in the secreted. The catalysed reaction is Preferential cleavage of bonds with hydrophobic residues in P1'. Also 3-Asn-|-Gln-4 and 8-Gly-|-Ser-9 bonds in insulin B chain.. Its function is as follows. Secreted metalloproteinase that allows assimilation of proteinaceous substrates. Shows high activities on basic nuclear substrates such as histone and protamine. The protein is Neutral protease 2 homolog PADG_00776 of Paracoccidioides brasiliensis (strain Pb18).